A 158-amino-acid chain; its full sequence is MQCPSCQNTDSRVLESRAADGGRSVRRRRECLNCDFRFTTYERVETVPITVIKRDGCRELFNRTKVLHGLSRACDKTGLDAARLETVVENLELQLQQRTAKEVASSEIGELVLKELKQISEVAYIRFASVYRQFRGIDDFVSTLETMNTEQEHLAAVR.

The segment at Cys-3–Cys-34 is a zinc-finger region. One can recognise an ATP-cone domain in the interval Ile-49–Asp-139.

The protein belongs to the NrdR family. The cofactor is Zn(2+).

In terms of biological role, negatively regulates transcription of bacterial ribonucleotide reductase nrd genes and operons by binding to NrdR-boxes. This chain is Transcriptional repressor NrdR, found in Synechococcus sp. (strain CC9902).